Here is a 159-residue protein sequence, read N- to C-terminus: Ribosome-binding factor A (159 aa).

The tract at residues 127-159 (TYAGEADPYRRPAVDDAGDSADDADPAEDERPS) is disordered. Residues 142 to 159 (DAGDSADDADPAEDERPS) show a composition bias toward acidic residues.

Belongs to the RbfA family. Monomer. Binds 30S ribosomal subunits, but not 50S ribosomal subunits or 70S ribosomes.

The protein localises to the cytoplasm. Its function is as follows. One of several proteins that assist in the late maturation steps of the functional core of the 30S ribosomal subunit. Associates with free 30S ribosomal subunits (but not with 30S subunits that are part of 70S ribosomes or polysomes). Required for efficient processing of 16S rRNA. May interact with the 5'-terminal helix region of 16S rRNA. This is Ribosome-binding factor A from Beutenbergia cavernae (strain ATCC BAA-8 / DSM 12333 / CCUG 43141 / JCM 11478 / NBRC 16432 / NCIMB 13614 / HKI 0122).